A 225-amino-acid polypeptide reads, in one-letter code: UPF0758 protein BCE33L4198 (225 aa).

An MPN domain is found at 103–225 (SIRNPEDCAR…FVSLKEKGHI (123 aa)). The Zn(2+) site is built by H174, H176, and D187. The short motif at 174–187 (HNHPSGDPAPSRED) is the JAMM motif element.

The protein belongs to the UPF0758 family.

In Bacillus cereus (strain ZK / E33L), this protein is UPF0758 protein BCE33L4198.